Here is a 366-residue protein sequence, read N- to C-terminus: tRNA/tmRNA (uracil-C(5))-methyltransferase (366 aa).

Residues Q190, Y218, N223, E239, and D299 each contribute to the S-adenosyl-L-methionine site. C324 functions as the Nucleophile in the catalytic mechanism. Catalysis depends on E358, which acts as the Proton acceptor.

This sequence belongs to the class I-like SAM-binding methyltransferase superfamily. RNA M5U methyltransferase family. TrmA subfamily.

The catalysed reaction is uridine(54) in tRNA + S-adenosyl-L-methionine = 5-methyluridine(54) in tRNA + S-adenosyl-L-homocysteine + H(+). It carries out the reaction uridine(341) in tmRNA + S-adenosyl-L-methionine = 5-methyluridine(341) in tmRNA + S-adenosyl-L-homocysteine + H(+). Dual-specificity methyltransferase that catalyzes the formation of 5-methyluridine at position 54 (m5U54) in all tRNAs, and that of position 341 (m5U341) in tmRNA (transfer-mRNA). The polypeptide is tRNA/tmRNA (uracil-C(5))-methyltransferase (Salmonella choleraesuis (strain SC-B67)).